The sequence spans 564 residues: Eukaryotic translation initiation factor 3 subunit L (564 aa).

Ser2 is subject to N-acetylserine. The PCI domain maps to 331–537 (DAIRVFANIL…IHIADTKVAR (207 aa)). N6-acetyllysine occurs at positions 465 and 549.

This sequence belongs to the eIF-3 subunit L family. As to quaternary structure, component of the eukaryotic translation initiation factor 3 (eIF-3) complex, which is composed of 13 subunits: EIF3A, EIF3B, EIF3C, EIF3D, EIF3E, EIF3F, EIF3G, EIF3H, EIF3I, EIF3J, EIF3K, EIF3L and EIF3M. The eIF-3 complex appears to include 3 stable modules: module A is composed of EIF3A, EIF3B, EIF3G and EIF3I; module B is composed of EIF3F, EIF3H, and EIF3M; and module C is composed of EIF3C, EIF3D, EIF3E, EIF3K and EIF3L. EIF3C of module C binds EIF3B of module A and EIF3H of module B, thereby linking the three modules. EIF3J is a labile subunit that binds to the eIF-3 complex via EIF3B. The eIF-3 complex interacts with RPS6KB1 under conditions of nutrient depletion. Mitogenic stimulation leads to binding and activation of a complex composed of MTOR and RPTOR, leading to phosphorylation and release of RPS6KB1 and binding of EIF4B to eIF-3. Interacts with RRN3.

It is found in the cytoplasm. Component of the eukaryotic translation initiation factor 3 (eIF-3) complex, which is required for several steps in the initiation of protein synthesis. The eIF-3 complex associates with the 40S ribosome and facilitates the recruitment of eIF-1, eIF-1A, eIF-2:GTP:methionyl-tRNAi and eIF-5 to form the 43S pre-initiation complex (43S PIC). The eIF-3 complex stimulates mRNA recruitment to the 43S PIC and scanning of the mRNA for AUG recognition. The eIF-3 complex is also required for disassembly and recycling of post-termination ribosomal complexes and subsequently prevents premature joining of the 40S and 60S ribosomal subunits prior to initiation. The eIF-3 complex specifically targets and initiates translation of a subset of mRNAs involved in cell proliferation, including cell cycling, differentiation and apoptosis, and uses different modes of RNA stem-loop binding to exert either translational activation or repression. The polypeptide is Eukaryotic translation initiation factor 3 subunit L (Bos taurus (Bovine)).